Consider the following 22-residue polypeptide: AEILFGDVRPPWMPPPIFPEMP.

This sequence belongs to the frog skin active peptide (FSAP) family. Rothein subfamily. In terms of tissue distribution, expressed by the skin dorsal glands.

The protein localises to the secreted. Functionally, lacks antimicrobial activity. Does not inhibit the formation of NO by neuronal nitric oxide. This Litoria rothii (Roth's tree frog) protein is Rothein 4.1.